The chain runs to 609 residues: Dihydroxy-acid dehydratase (609 aa).

Aspartate 82 contacts Mg(2+). Cysteine 123 is a binding site for [2Fe-2S] cluster. Mg(2+)-binding residues include aspartate 124 and lysine 125. Position 125 is an N6-carboxylysine (lysine 125). Cysteine 192 is a binding site for [2Fe-2S] cluster. Glutamate 489 contacts Mg(2+). The active-site Proton acceptor is serine 515.

This sequence belongs to the IlvD/Edd family. As to quaternary structure, homodimer. Requires [2Fe-2S] cluster as cofactor. Mg(2+) serves as cofactor.

It carries out the reaction (2R)-2,3-dihydroxy-3-methylbutanoate = 3-methyl-2-oxobutanoate + H2O. The catalysed reaction is (2R,3R)-2,3-dihydroxy-3-methylpentanoate = (S)-3-methyl-2-oxopentanoate + H2O. It participates in amino-acid biosynthesis; L-isoleucine biosynthesis; L-isoleucine from 2-oxobutanoate: step 3/4. It functions in the pathway amino-acid biosynthesis; L-valine biosynthesis; L-valine from pyruvate: step 3/4. Its function is as follows. Functions in the biosynthesis of branched-chain amino acids. Catalyzes the dehydration of (2R,3R)-2,3-dihydroxy-3-methylpentanoate (2,3-dihydroxy-3-methylvalerate) into 2-oxo-3-methylpentanoate (2-oxo-3-methylvalerate) and of (2R)-2,3-dihydroxy-3-methylbutanoate (2,3-dihydroxyisovalerate) into 2-oxo-3-methylbutanoate (2-oxoisovalerate), the penultimate precursor to L-isoleucine and L-valine, respectively. This Azobacteroides pseudotrichonymphae genomovar. CFP2 protein is Dihydroxy-acid dehydratase.